A 1349-amino-acid polypeptide reads, in one-letter code: Protein turtle homolog B (1349 aa).

A signal peptide spans 1–20 (MIWYVATFIASVIGTRGLAA). Topologically, residues 21 to 722 (EGAHGLREEP…DLTEDGLARP (702 aa)) are extracellular. 5 consecutive Ig-like domains span residues 24–129 (HGLR…HNGS), 139–226 (PTFT…LLVQ), 228–320 (PPFI…AYLT), 324–415 (PARV…ARLV), and 420–504 (PYFT…THLT). Intrachain disulfides connect cysteine 45–cysteine 113 and cysteine 161–cysteine 208. 2 N-linked (GlcNAc...) asparagine glycosylation sites follow: asparagine 241 and asparagine 258. Cystine bridges form between cysteine 250–cysteine 303, cysteine 346–cysteine 397, and cysteine 442–cysteine 488. 2 consecutive Fibronectin type-III domains span residues 512–604 (APGS…TLAF) and 614–708 (LVTP…STDI). N-linked (GlcNAc...) asparagine glycosylation is present at asparagine 624. A helical transmembrane segment spans residues 723–743 (VLAGIVATICFLAAAILFSTL). Over 744–1349 (AACFVNKQRK…SPPERALSKL (606 aa)) the chain is Cytoplasmic. 3 disordered regions span residues 758 to 817 (RKKD…EKEL), 911 to 1081 (QLTP…RGLP), and 1099 to 1349 (APKG…LSKL). Serine 775, serine 783, and serine 794 each carry phosphoserine. The span at 911 to 921 (QLTPLSSSQES) shows a compositional bias: polar residues. Positions 985-998 (VPEVGSPLSSVMSS) are enriched in low complexity. 3 stretches are compositionally biased toward polar residues: residues 1018–1033 (ENAS…TPTG), 1129–1141 (LVSQ…TSQG), and 1199–1214 (SRLS…SRTG). Omega-N-methylarginine is present on arginine 1136. Serine 1207 and serine 1215 each carry phosphoserine. The span at 1251–1271 (STPSTGSPSQSSRSGSPSYRP) shows a compositional bias: low complexity. Residues 1283–1292 (PSPPPGPAPA) show a composition bias toward pro residues.

This sequence belongs to the immunoglobulin superfamily. Turtle family. As to quaternary structure, found in a complex with MAGI2 and NLGN2, where it interacts with MAGI2 (via PDZ 5 and PDZ 6 domains). In terms of processing, N-glycosylated and sialylated. Not significantly O-glycosylated.

The protein localises to the postsynaptic cell membrane. It localises to the postsynaptic density. Transmembrane protein which is abundantly expressed in interneurons, where it may regulate inhibitory synapse development. May mediate homophilic cell adhesion. This chain is Protein turtle homolog B (IGSF9B), found in Homo sapiens (Human).